A 63-amino-acid polypeptide reads, in one-letter code: TAGATGATRQDGSTDAFEKREKAQEDLYIRQHEKEQLEALKESLKKQKKSLDDLEBKIDDLTK.

The segment at 1-23 (TAGATGATRQDGSTDAFEKREKA) is disordered. The stretch at 18–62 (EKREKAQEDLYIRQHEKEQLEALKESLKKQKKSLDDLEBKIDDLT) forms a coiled coil.

Belongs to the ATPase inhibitor family.

Its subcellular location is the mitochondrion. In terms of biological role, this protein forms a one-to-one complex with ATPase to inhibit the enzyme activity completely. The chain is ATPase inhibitor, mitochondrial from Cyberlindnera jadinii (Torula yeast).